We begin with the raw amino-acid sequence, 283 residues long: 9,11-endoperoxide prostaglandin H2 reductase (283 aa).

NADP(+) contacts are provided by residues 23-24 and aspartate 48; that span reads VW. Tyrosine 53 (proton donor) is an active-site residue. Residue histidine 111 participates in substrate binding. NADP(+)-binding positions include 140-141, glutamine 162, 188-193, 234-236, and 240-244; these read SN, WSPLGS, KST, and RIQEN. The disordered stretch occupies residues 264–283; the sequence is NEDKRIGGDPDNFFPGGEEA.

This sequence belongs to the aldo/keto reductase family. As to quaternary structure, monomer.

Its subcellular location is the cytoplasm. The catalysed reaction is prostaglandin F2alpha + NADP(+) = prostaglandin H2 + NADPH + H(+). It functions in the pathway lipid metabolism; prostaglandin biosynthesis. Catalyzes the NADP-dependent formation of prostaglandin F2-alpha from prostaglandin H2. Also has aldo/ketoreductase activity towards the synthetic substrates 9,10-phenanthrenequinone and p-nitrobenzaldehyde. The protein is 9,11-endoperoxide prostaglandin H2 reductase of Trypanosoma cruzi (strain CL Brener).